Reading from the N-terminus, the 107-residue chain is Anaphase-promoting complex subunit 14 (107 aa).

In terms of assembly, the APC/C is composed of at least 13 subunits: apc1, apc2, nuc2, apc4, apc5, cut9, apc8, apc10, apc11, hcn1, apc13, apc14 and apc15.

The protein localises to the ascus epiplasm. Functionally, component of the anaphase promoting complex/cyclosome (APC/C), a cell cycle-regulated E3 ubiquitin-protein ligase complex that controls progression through mitosis and the G1 phase of the cell cycle. The APC/C is thought to confer substrate specificity and, in the presence of ubiquitin-conjugating E2 enzymes, it catalyzes the formation of protein-ubiquitin conjugates that are subsequently degraded by the 26S proteasome. Appears to play a role in spore wall formation. The polypeptide is Anaphase-promoting complex subunit 14 (Schizosaccharomyces pombe (strain 972 / ATCC 24843) (Fission yeast)).